The sequence spans 625 residues: DELLA protein SLR1 (625 aa).

Residues 1–34 (MKREYQEAGGSSGGGSSADMGSCKDKVMAGAAGE) are disordered. Positions 39 to 43 (DELLA) match the DELLA motif motif. The interval 167 to 208 (TADPSAADSARDTKRMRTGGGSTSSSSSSSSSLGGGASRGSV) is disordered. Residues 189-198 (TSSSSSSSSS) are compositionally biased toward low complexity. Residues 232–621 (VDTQEAGIRL…RPLIATSAWR (390 aa)) enclose the GRAS domain. Residues 239–294 (IRLVHALLACAEAVQQENFAAAEALVKQIPTLAASQGGAMRKVAAYFGEALARRVY) are leucine repeat I (LRI). Residues 241 to 278 (LVHALLACAEAVQQENFAAAEALVKQIPTLAASQGGAM) form a required for possible homodimerization region. Positions 246–250 (LACAE) match the LxCxE motif motif. Residues 313 to 378 (HAHFYESCPY…GGPPSFRLTG (66 aa)) are VHIID. Positions 344 to 348 (VHVVD) match the VHIID motif. A leucine repeat II (LRII) region spans residues 392–431 (QVGWKLAQFAHTIRVDFQYRGLVAATLADLEPFMLQPEGE). The PFYRE stretch occupies residues 441-542 (IAVNSVFELH…EVYLGRQICN (102 aa)). Residues 449 to 453 (LHRLL) carry the LXXLL motif motif. The segment at 545 to 621 (ACEGAERTER…RPLIATSAWR (77 aa)) is SAW.

The protein belongs to the GRAS family. DELLA subfamily.

Probable transcriptional regulator that acts as a repressor of the gibberellin (GA) signaling pathway. Probably acts by participating in large multiprotein complexes that repress transcription of GA-inducible genes. Upon GA application, it is degraded by the proteasome, allowing the GA signaling pathway. In contrast, its overexpression prevents the GA signaling pathway and induces a dwarf phenotype. This chain is DELLA protein SLR1, found in Oryza sativa subsp. indica (Rice).